Reading from the N-terminus, the 311-residue chain is Putative prophage capsid protein YqbE (311 aa).

Belongs to the encapsulin family. Family 3 subfamily.

Its function is as follows. Possibly a prophage capsid protein. The chain is Putative prophage capsid protein YqbE (yqbE) from Bacillus subtilis (strain 168).